Reading from the N-terminus, the 110-residue chain is UPF0060 membrane protein Psyc_0916 (110 aa).

4 consecutive transmembrane segments (helical) span residues 7–27 (VGLF…PYLW), 33–53 (SIWL…LLSL), 63–83 (AAYG…VNGI), and 87–107 (TWDI…MFAP).

It belongs to the UPF0060 family.

Its subcellular location is the cell inner membrane. In Psychrobacter arcticus (strain DSM 17307 / VKM B-2377 / 273-4), this protein is UPF0060 membrane protein Psyc_0916.